The sequence spans 479 residues: Odorant receptor coreceptor (479 aa).

The Cytoplasmic portion of the chain corresponds to 1 to 43 (MHVQPTKYHGLVLDLMPNIRLMQGFGHFLFRYVSGPVLIRKLY). A helical membrane pass occupies residues 44 to 64 (SWWNLIMILLQYFAIMGNLVM). Residues 65 to 73 (NTGDVNELT) are Extracellular-facing. Residues 74–94 (ANTITTLFFTHSVTKFIYVAV) form a helical membrane-spanning segment. At 95-133 (NSEHFYRTLGIWNQPNSHSLFAESDARYHSIALAKMRKL) the chain is on the cytoplasmic side. Residues 134 to 154 (LVMVMVTTVLSVVAWITITFF) form a helical membrane-spanning segment. The Extracellular portion of the chain corresponds to 155-187 (GDSVKNVFDKETNETYTVEIPRLPIKALYPWDA). Residue N167 is glycosylated (N-linked (GlcNAc...) asparagine). The helical transmembrane segment at 188–208 (MSGVPYFFSFVYQAYFLLFSM) threads the bilayer. Residues 209–344 (CQANLADVMF…VERHKHVVRL (136 aa)) are Cytoplasmic-facing. The helical transmembrane segment at 345-365 (VSAIGETYGAALLLHMLTSTI) threads the bilayer. Over 366–383 (KLTLLAYQATKIDALNVY) the chain is Extracellular. A helical transmembrane segment spans residues 384–404 (GLTVIGYLVYALAQVFLFCIF). Topologically, residues 405–455 (GNRLIEESSSVMEAAYSCHWYDGSEEAKTFVQIVCQQCQKAMTISGAKFFT) are cytoplasmic. Residues 456-476 (VSLDLFASVLGAVVTYFMVLV) traverse the membrane as a helical segment. The Extracellular segment spans residues 477–479 (QLK).

Belongs to the insect chemoreceptor superfamily. Heteromeric odorant receptor channel (TC 1.A.69) family. Orco subfamily. As to quaternary structure, heterodimer with conventional odorant receptors (ORs). In terms of tissue distribution, expressed in female antenna, maxillary palp and proboscis. Not detected in male tissues.

The protein localises to the cell membrane. In terms of biological role, odorant coreceptor which complexes with conventional odorant receptors (ORs) to form odorant-sensing units, providing sensitive and prolonged odorant signaling and calcium permeability. Orco is a universal and integral part of the functional odorant receptor, involved in the dendritic localization of other olfactory receptors. Required for detecting a host for blood feeding. Plays a key role in preferred attraction of females for humans over non-human hosts for blood feeding. In Aedes albopictus (Asian tiger mosquito), this protein is Odorant receptor coreceptor.